A 466-amino-acid polypeptide reads, in one-letter code: 3-isopropylmalate dehydratase large subunit (466 aa).

Positions 347, 407, and 410 each coordinate [4Fe-4S] cluster.

This sequence belongs to the aconitase/IPM isomerase family. LeuC type 1 subfamily. In terms of assembly, heterodimer of LeuC and LeuD. It depends on [4Fe-4S] cluster as a cofactor.

It carries out the reaction (2R,3S)-3-isopropylmalate = (2S)-2-isopropylmalate. It functions in the pathway amino-acid biosynthesis; L-leucine biosynthesis; L-leucine from 3-methyl-2-oxobutanoate: step 2/4. Functionally, catalyzes the isomerization between 2-isopropylmalate and 3-isopropylmalate, via the formation of 2-isopropylmaleate. The protein is 3-isopropylmalate dehydratase large subunit of Shigella flexneri.